Reading from the N-terminus, the 226-residue chain is Cytidylate kinase (226 aa).

Residue 10 to 18 participates in ATP binding; the sequence is GPASSGKST.

It is found in the cytoplasm. It carries out the reaction CMP + ATP = CDP + ADP. The catalysed reaction is dCMP + ATP = dCDP + ADP. The sequence is that of Cytidylate kinase from Streptococcus pyogenes serotype M6 (strain ATCC BAA-946 / MGAS10394).